Here is a 509-residue protein sequence, read N- to C-terminus: Maturase K (509 aa).

Belongs to the intron maturase 2 family. MatK subfamily.

Its subcellular location is the plastid. It localises to the chloroplast. Its function is as follows. Usually encoded in the trnK tRNA gene intron. Probably assists in splicing its own and other chloroplast group II introns. The sequence is that of Maturase K from Eucommia ulmoides (Hardy rubber tree).